A 162-amino-acid chain; its full sequence is MAIKKLVPASHPILTKKAQAVKTFDDSLKRLLQDLEDTMYAQEAAGLCAPQINQSLQVAIIDMEMEGLLQLVNPKIISQSNETITDLEGSITLPDVYGEVTRSKMIVVESYDVNGNKVELTAHEDVARMILHIIDQMNGIPFTERADRILTDKEVEAYFIND.

Belongs to the polypeptide deformylase family.

The protein is Peptide deformylase-like of Staphylococcus aureus (strain COL).